The chain runs to 469 residues: UDP-glycosyltransferase 75B1 (469 aa).

The active-site Proton acceptor is the H16. H16 is an an anthocyanidin binding site. 7 residues coordinate UDP-alpha-D-glucose: Q334, H349, W352, S354, E357, D373, and Q374.

It belongs to the UDP-glycosyltransferase family. As to quaternary structure, interacts with CALS1, ROP1 and phragmoplastin.

Its subcellular location is the cytoplasm. It localises to the perinuclear region. The protein localises to the cytoskeleton. The protein resides in the phragmoplast. It catalyses the reaction (indol-3-yl)acetate + UDP-alpha-D-glucose = 1-O-(indol-3-ylacetyl)-beta-D-glucose + UDP. Its pathway is plant hormone metabolism; auxin conjugation. Functionally, possesses low catalytic activity on indole-3-acetic acid (IAA) in vitro. May transfer UDP-glucose from sucrose synthase to callose synthase for the synthesis of callose at the forming cell plate during cytokinesis. Has high affinity for 4-aminobenzoate. Catalyzes the formation of 4-aminobenzoate glucose ester which represents a storage form of 4-aminobenzoate in the vacuole. Is the major source of this activity in the plant. Also active in vitro on benzoates and benzoate derivatives. This Arabidopsis thaliana (Mouse-ear cress) protein is UDP-glycosyltransferase 75B1 (UGT75B1).